A 296-amino-acid polypeptide reads, in one-letter code: Phosphatidylglycerol--prolipoprotein diacylglyceryl transferase (296 aa).

A disordered region spans residues 1 to 21; the sequence is MRHRRRPGGRSTAGGTPVSQL. A run of 7 helical transmembrane segments spans residues 34-54, 72-92, 108-128, 136-158, 195-215, 227-243, and 258-278; these read GPLT…VAYI, ELCA…HVIT, FFIW…GLAI, GIRF…AIGR, FHPT…FLLW, LFTL…FWVE, and LNDV…IVLQ. Arginine 158 serves as a coordination point for a 1,2-diacyl-sn-glycero-3-phospho-(1'-sn-glycerol).

This sequence belongs to the Lgt family.

It localises to the cell membrane. The catalysed reaction is L-cysteinyl-[prolipoprotein] + a 1,2-diacyl-sn-glycero-3-phospho-(1'-sn-glycerol) = an S-1,2-diacyl-sn-glyceryl-L-cysteinyl-[prolipoprotein] + sn-glycerol 1-phosphate + H(+). The protein operates within protein modification; lipoprotein biosynthesis (diacylglyceryl transfer). Functionally, catalyzes the transfer of the diacylglyceryl group from phosphatidylglycerol to the sulfhydryl group of the N-terminal cysteine of a prolipoprotein, the first step in the formation of mature lipoproteins. This is Phosphatidylglycerol--prolipoprotein diacylglyceryl transferase from Cutibacterium acnes (strain DSM 16379 / KPA171202) (Propionibacterium acnes).